The sequence spans 181 residues: Isopentenyl-diphosphate Delta-isomerase (181 aa).

H25 and H32 together coordinate Mn(2+). Positions 30 to 164 (PLHLAFSCWL…PWAFSPWMVM (135 aa)) constitute a Nudix hydrolase domain. Residue C67 is part of the active site. H69 lines the Mn(2+) pocket. Residue E87 participates in Mg(2+) binding. E114 and E116 together coordinate Mn(2+). The active site involves E116.

It belongs to the IPP isomerase type 1 family. As to quaternary structure, homodimer. Requires Mg(2+) as cofactor. The cofactor is Mn(2+).

The protein resides in the cytoplasm. It carries out the reaction isopentenyl diphosphate = dimethylallyl diphosphate. Its pathway is isoprenoid biosynthesis; dimethylallyl diphosphate biosynthesis; dimethylallyl diphosphate from isopentenyl diphosphate: step 1/1. Functionally, catalyzes the 1,3-allylic rearrangement of the homoallylic substrate isopentenyl (IPP) to its highly electrophilic allylic isomer, dimethylallyl diphosphate (DMAPP). The chain is Isopentenyl-diphosphate Delta-isomerase from Salmonella agona (strain SL483).